A 270-amino-acid chain; its full sequence is DNA adenine methylase (270 aa).

S-adenosyl-L-methionine contacts are provided by Trp10, Lys14, Asp54, and Asp181.

The protein belongs to the N(4)/N(6)-methyltransferase family.

The enzyme catalyses a 2'-deoxyadenosine in DNA + S-adenosyl-L-methionine = an N(6)-methyl-2'-deoxyadenosine in DNA + S-adenosyl-L-homocysteine + H(+). In terms of biological role, an alpha subtype methylase, recognizes the double-stranded sequence 5'-GATC-3' and methylates A-2. Overexpression leads to hypermutability. May be involved in methyl-directed DNA mismatch repair, initiation of chromosome replication and gene expression. This Serratia marcescens protein is DNA adenine methylase.